A 935-amino-acid chain; its full sequence is C-1-tetrahydrofolate synthase, cytoplasmic (935 aa).

Position 1 is an N-acetylmethionine (Met-1). Positions 2 to 291 (APAGILNGKV…MLMQSTVESA (290 aa)) are methylenetetrahydrofolate dehydrogenase and methenyltetrahydrofolate cyclohydrolase (D/C) domain. Substrate contacts are provided by residues 52-56 (YINVK) and 99-101 (VQL). Residue Lys-56 is part of the active site. NADP(+) contacts are provided by residues 172 to 174 (GRS) and Ser-197. 272-276 (PGGVG) serves as a coordination point for substrate. A formyltetrahydrofolate synthetase domain region spans residues 310 to 935 (LNLKTPVPSD…PETEQVNGLF (626 aa)). Ser-318 carries the post-translational modification Phosphoserine. ATP is bound at residue 380-387 (TPLGEGKS). Phosphoserine occurs at positions 413 and 490.

The protein in the N-terminal section; belongs to the tetrahydrofolate dehydrogenase/cyclohydrolase family. In the C-terminal section; belongs to the formate--tetrahydrofolate ligase family. As to quaternary structure, homodimer.

The protein resides in the cytoplasm. It catalyses the reaction (6R)-5,10-methylene-5,6,7,8-tetrahydrofolate + NADP(+) = (6R)-5,10-methenyltetrahydrofolate + NADPH. The catalysed reaction is (6R)-5,10-methenyltetrahydrofolate + H2O = (6R)-10-formyltetrahydrofolate + H(+). It carries out the reaction (6S)-5,6,7,8-tetrahydrofolate + formate + ATP = (6R)-10-formyltetrahydrofolate + ADP + phosphate. The protein operates within one-carbon metabolism; tetrahydrofolate interconversion. Trifunctional enzyme that catalyzes the interconversion of three forms of one-carbon-substituted tetrahydrofolate: (6R)-5,10-methylene-5,6,7,8-tetrahydrofolate, 5,10-methenyltetrahydrofolate and (6S)-10-formyltetrahydrofolate. These derivatives of tetrahydrofolate are differentially required in nucleotide and amino acid biosynthesis, (6S)-10-formyltetrahydrofolate being required for purine biosynthesis while (6R)-5,10-methylene-5,6,7,8-tetrahydrofolate is used for serine and methionine biosynthesis for instance. The protein is C-1-tetrahydrofolate synthase, cytoplasmic (Mthfd1) of Rattus norvegicus (Rat).